Reading from the N-terminus, the 212-residue chain is Acyl-homoserine-lactone synthase (212 aa).

It belongs to the autoinducer synthase family.

The enzyme catalyses a fatty acyl-[ACP] + S-adenosyl-L-methionine = an N-acyl-L-homoserine lactone + S-methyl-5'-thioadenosine + holo-[ACP] + H(+). In terms of biological role, required for the synthesis of OHHL (N-(3-oxohexanoyl)-L-homoserine lactone), an autoinducer molecule which binds to the EchR transcriptional regulator. This is Acyl-homoserine-lactone synthase (echI) from Dickeya chrysanthemi (Pectobacterium chrysanthemi).